The sequence spans 540 residues: Putative serine protease F56F10.1 (540 aa).

A signal peptide spans 1 to 16 (MLRNLLLLLLPLLIEA). 2 N-linked (GlcNAc...) asparagine glycosylation sites follow: Asn58 and Asn87. Catalysis depends on Ser182, which acts as the Charge relay system. 6 N-linked (GlcNAc...) asparagine glycosylation sites follow: Asn270, Asn300, Asn317, Asn343, Asn441, and Asn449. The active-site Charge relay system is the Asp453. N-linked (GlcNAc...) asparagine glycosylation is present at Asn475. His479 acts as the Charge relay system in catalysis.

It belongs to the peptidase S28 family.

This chain is Putative serine protease F56F10.1, found in Caenorhabditis elegans.